A 130-amino-acid polypeptide reads, in one-letter code: Small ribosomal subunit protein uS9 (130 aa).

The protein belongs to the universal ribosomal protein uS9 family.

The chain is Small ribosomal subunit protein uS9 from Salmonella paratyphi C (strain RKS4594).